An 88-amino-acid polypeptide reads, in one-letter code: Small ribosomal subunit protein bS20 (88 aa).

A disordered region spans residues 1–27; the sequence is MANSKSAKKRALQSEKRRQHNASRRSM.

The protein belongs to the bacterial ribosomal protein bS20 family.

Functionally, binds directly to 16S ribosomal RNA. This is Small ribosomal subunit protein bS20 from Shewanella denitrificans (strain OS217 / ATCC BAA-1090 / DSM 15013).